Here is a 92-residue protein sequence, read N- to C-terminus: DNA-directed RNA polymerase subunit Rpo11 (92 aa).

It belongs to the archaeal Rpo11/eukaryotic RPB11/RPC19 RNA polymerase subunit family. Part of the 13-subunit RNA polymerase complex.

The protein resides in the cytoplasm. The catalysed reaction is RNA(n) + a ribonucleoside 5'-triphosphate = RNA(n+1) + diphosphate. In terms of biological role, DNA-dependent RNA polymerase (RNAP) catalyzes the transcription of DNA into RNA using the four ribonucleoside triphosphates as substrates. This is DNA-directed RNA polymerase subunit Rpo11 from Saccharolobus solfataricus (strain ATCC 35092 / DSM 1617 / JCM 11322 / P2) (Sulfolobus solfataricus).